A 109-amino-acid chain; its full sequence is uncharacterized protein (109 aa).

Residues 75-95 (MALFHTVFILWPHFCGILWTV) traverse the membrane as a helical segment.

It is found in the membrane. This is an uncharacterized protein from Saccharomyces cerevisiae (strain ATCC 204508 / S288c) (Baker's yeast).